Consider the following 222-residue polypeptide: Putative N-acetylmannosamine-6-phosphate 2-epimerase (222 aa).

The protein belongs to the NanE family.

The enzyme catalyses an N-acyl-D-glucosamine 6-phosphate = an N-acyl-D-mannosamine 6-phosphate. It functions in the pathway amino-sugar metabolism; N-acetylneuraminate degradation; D-fructose 6-phosphate from N-acetylneuraminate: step 3/5. Functionally, converts N-acetylmannosamine-6-phosphate (ManNAc-6-P) to N-acetylglucosamine-6-phosphate (GlcNAc-6-P). The protein is Putative N-acetylmannosamine-6-phosphate 2-epimerase of Staphylococcus aureus (strain MSSA476).